Consider the following 258-residue polypeptide: Agamous-like MADS-box protein AGL3 (258 aa).

Residues 3-57 (RGKVELKRIENKINRQVTFAKRRNGLLKKAYELSVLCDAEIALLIFSNRGKLYEF) form the MADS-box domain. Residues 88–178 (LQDKYQDYLK…RRKLEDSDAA (91 aa)) form the K-box domain. Residues 186–214 (SSAAEQQQQHQQQQQGMSSYQSNPPIQEA) are disordered. Positions 191–200 (QQQQHQQQQQ) are enriched in low complexity. Over residues 201–210 (GMSSYQSNPP) the composition is skewed to polar residues.

In terms of assembly, forms homodimers. Interacts with TT16/AGL32. In terms of tissue distribution, expressed in aerial vegetative organs and flowers, but not in roots. Expressed in flower primordia.

The protein resides in the nucleus. Functionally, probable transcription factor that binds specifically to the CArG box DNA sequence 5'-CC (A/T)6 GG-3'. Plays an important role in the determination of flower meristem identity. Involved in the specification of sepal identity. Contributes to the development of petals, stamens and carpels. The chain is Agamous-like MADS-box protein AGL3 (AGL3) from Arabidopsis thaliana (Mouse-ear cress).